The following is a 396-amino-acid chain: G-protein coupled receptor 84 (396 aa).

Residues 1-26 (MWNASDVNFSCYHESVLGYRYVAVSW) lie on the Extracellular side of the membrane. Residues N3 and N8 are each glycosylated (N-linked (GlcNAc...) asparagine). Residues 27-47 (GIVVAVTGTVGNVLTLLALAI) form a helical membrane-spanning segment. The Cytoplasmic portion of the chain corresponds to 48-57 (QPKLRTRFNL). The helical transmembrane segment at 58 to 78 (LIANLTVADLLYCTLLQPFSV) threads the bilayer. The Extracellular segment spans residues 79 to 94 (DTYLHLHWRTGATFCQ). The helical transmembrane segment at 95 to 115 (IFGFLLFVSNSVSILTLCLIA) threads the bilayer. Residues 116–144 (LGRYLLIAHPKLFPQVFSAKGIVLALVST) are Cytoplasmic-facing. Residues 145 to 165 (WVVAVASFAPLWPIYILVPVV) traverse the membrane as a helical segment. Residues 166 to 180 (CTCSFDRIRGQPYTT) are Extracellular-facing. Residues 181–201 (ILMGIYFVVGLSSVGVFYCLI) form a helical membrane-spanning segment. Over 202 to 320 (HQQVKRAAQA…PSEFGKVTRM (119 aa)) the chain is Cytoplasmic. S221 and S224 each carry phosphoserine. Residues 243-310 (SGLASGGPSE…TKGAQRAQDS (68 aa)) form a disordered region. 2 positions are modified to phosphothreonine: T263 and T264. Residues 321–341 (CFAVFLCFTLSYIPFLLLNIL) traverse the membrane as a helical segment. At 342–352 (DAKVQAPRVVH) the chain is on the extracellular side. A helical membrane pass occupies residues 353 to 373 (MLAANLTWLNGCINPVLYAAM). At 374 to 396 (NRQFRQAYGSLLRRGPQSFHRFH) the chain is on the cytoplasmic side.

Belongs to the G-protein coupled receptor 1 family. Interacts with ARRB2 and ARR3. Phosphorylated by a subset of GPR84-activating ligands. Constitutively phosphorylated at Ser-221 and Ser-224 in the absence of 2-HTP. By contrast, Thr-263 and Thr-264 are phosphorylated only following prior cell treatment with 2-HTP.

The protein localises to the cell membrane. G protein-coupled receptor that responds endogenously to dietary fatty acids or nutrient, specifically medium-chain free fatty acid (FFA) with carbon chain lengths of C9 to C14. Capric acid (C10:0), undecanoic acid (C11:0) and lauric acid (C12:0) are the most potent agonists. In immune cells, functions as a pro-inflammatory receptor via 6-OAU and promotes the expression of pro-inflammatory mediators such as TNFalpha, IL-6 and IL-12B as well as stimulating chemotactic responses through activation of signaling mediators AKT, ERK and NF-kappa-B. In addition, triggers increased bacterial adhesion and phagocytosis in macrophages and regulates pro-inflammatory function via enhancing NLRP3 inflammasome activation. Also plays an important role in inflammation by modulating neutrophil functions. Mechanistically, promotes neutrophil chemotaxis, reactive oxygen species (ROS) production and degranulation via LYN-AKT/ERK pathway. To regulate ROS, communicates with the two formyl peptide receptors FPR2 and FPR1 to control the NADPH oxidase activity in neutrophils. This is G-protein coupled receptor 84 (GPR84) from Bos taurus (Bovine).